Consider the following 382-residue polypeptide: RNA exonuclease 3 (382 aa).

Residues 223-369 enclose the Exonuclease domain; it reads VLALDCEMAY…EDAIAAMDVV (147 aa).

Belongs to the REXO1/REXO3 family.

It is found in the cytoplasm. The protein resides in the nucleus. Its function is as follows. 3' to 5' exoribonuclease required for proper 3' end maturation of MRP RNA and of the U5L snRNA. This chain is RNA exonuclease 3 (REX3), found in Eremothecium gossypii (strain ATCC 10895 / CBS 109.51 / FGSC 9923 / NRRL Y-1056) (Yeast).